Consider the following 35-residue polypeptide: Cupiennin-2d (35 aa).

Gln-35 is modified (glutamine amide).

As to expression, expressed by the venom gland.

Its subcellular location is the secreted. The sequence is that of Cupiennin-2d from Cupiennius salei (American wandering spider).